Here is a 362-residue protein sequence, read N- to C-terminus: Chorismate synthase (362 aa).

R47 contacts NADP(+). FMN is bound by residues 124 to 126, G286, 301 to 305, and R327; these read RSS and KPTAT.

This sequence belongs to the chorismate synthase family. Homotetramer. FMNH2 is required as a cofactor.

It carries out the reaction 5-O-(1-carboxyvinyl)-3-phosphoshikimate = chorismate + phosphate. The protein operates within metabolic intermediate biosynthesis; chorismate biosynthesis; chorismate from D-erythrose 4-phosphate and phosphoenolpyruvate: step 7/7. In terms of biological role, catalyzes the anti-1,4-elimination of the C-3 phosphate and the C-6 proR hydrogen from 5-enolpyruvylshikimate-3-phosphate (EPSP) to yield chorismate, which is the branch point compound that serves as the starting substrate for the three terminal pathways of aromatic amino acid biosynthesis. This reaction introduces a second double bond into the aromatic ring system. This Synechocystis sp. (strain ATCC 27184 / PCC 6803 / Kazusa) protein is Chorismate synthase.